An 85-amino-acid polypeptide reads, in one-letter code: Small ribosomal subunit protein bS20 (85 aa).

This sequence belongs to the bacterial ribosomal protein bS20 family.

Functionally, binds directly to 16S ribosomal RNA. The chain is Small ribosomal subunit protein bS20 from Borrelia garinii subsp. bavariensis (strain ATCC BAA-2496 / DSM 23469 / PBi) (Borreliella bavariensis).